The primary structure comprises 549 residues: CTP synthase (549 aa).

The tract at residues 1–266 is amidoligase domain; the sequence is MSAKYIFVTG…DKLALRYLHL (266 aa). S14 provides a ligand contact to CTP. S14 serves as a coordination point for UTP. ATP-binding positions include 15–20 and D72; that span reads SLGKGL. 2 residues coordinate Mg(2+): D72 and E140. Residues 147–149, 187–192, and K223 each bind CTP; these read DIE and KTKPTQ. UTP-binding positions include 187 to 192 and K223; that span reads KTKPTQ. 239-241 is a binding site for ATP; the sequence is KDV. The Glutamine amidotransferase type-1 domain maps to 291 to 533; it reads SIGIVGKYVE…VKAAYQNHKP (243 aa). G353 serves as a coordination point for L-glutamine. C380 (nucleophile; for glutamine hydrolysis) is an active-site residue. Residues 381 to 384, E404, and R461 each bind L-glutamine; that span reads LGMQ. Residues H506 and E508 contribute to the active site.

Belongs to the CTP synthase family. In terms of assembly, homotetramer.

The catalysed reaction is UTP + L-glutamine + ATP + H2O = CTP + L-glutamate + ADP + phosphate + 2 H(+). It catalyses the reaction L-glutamine + H2O = L-glutamate + NH4(+). It carries out the reaction UTP + NH4(+) + ATP = CTP + ADP + phosphate + 2 H(+). It functions in the pathway pyrimidine metabolism; CTP biosynthesis via de novo pathway; CTP from UDP: step 2/2. Its activity is regulated as follows. Allosterically activated by GTP, when glutamine is the substrate; GTP has no effect on the reaction when ammonia is the substrate. The allosteric effector GTP functions by stabilizing the protein conformation that binds the tetrahedral intermediate(s) formed during glutamine hydrolysis. Inhibited by the product CTP, via allosteric rather than competitive inhibition. Its function is as follows. Catalyzes the ATP-dependent amination of UTP to CTP with either L-glutamine or ammonia as the source of nitrogen. Regulates intracellular CTP levels through interactions with the four ribonucleotide triphosphates. The protein is CTP synthase of Acidobacterium capsulatum (strain ATCC 51196 / DSM 11244 / BCRC 80197 / JCM 7670 / NBRC 15755 / NCIMB 13165 / 161).